The following is a 324-amino-acid chain: Ribosomal RNA small subunit methyltransferase H (324 aa).

Residues 47–49, aspartate 67, leucine 96, aspartate 115, and glutamine 122 contribute to the S-adenosyl-L-methionine site; that span reads GGH.

It belongs to the methyltransferase superfamily. RsmH family.

The protein resides in the cytoplasm. The catalysed reaction is cytidine(1402) in 16S rRNA + S-adenosyl-L-methionine = N(4)-methylcytidine(1402) in 16S rRNA + S-adenosyl-L-homocysteine + H(+). Its function is as follows. Specifically methylates the N4 position of cytidine in position 1402 (C1402) of 16S rRNA. This chain is Ribosomal RNA small subunit methyltransferase H, found in Halorhodospira halophila (strain DSM 244 / SL1) (Ectothiorhodospira halophila (strain DSM 244 / SL1)).